We begin with the raw amino-acid sequence, 314 residues long: uncharacterized protein (314 aa).

This is an uncharacterized protein from Methanocaldococcus jannaschii (strain ATCC 43067 / DSM 2661 / JAL-1 / JCM 10045 / NBRC 100440) (Methanococcus jannaschii).